The sequence spans 366 residues: Chorismate synthase (366 aa).

NADP(+)-binding residues include R48 and R54. Residues 125–127 (RSS), 238–239 (NA), G278, 293–297 (KPTSS), and R319 each bind FMN.

This sequence belongs to the chorismate synthase family. In terms of assembly, homotetramer. It depends on FMNH2 as a cofactor.

The catalysed reaction is 5-O-(1-carboxyvinyl)-3-phosphoshikimate = chorismate + phosphate. The protein operates within metabolic intermediate biosynthesis; chorismate biosynthesis; chorismate from D-erythrose 4-phosphate and phosphoenolpyruvate: step 7/7. Its function is as follows. Catalyzes the anti-1,4-elimination of the C-3 phosphate and the C-6 proR hydrogen from 5-enolpyruvylshikimate-3-phosphate (EPSP) to yield chorismate, which is the branch point compound that serves as the starting substrate for the three terminal pathways of aromatic amino acid biosynthesis. This reaction introduces a second double bond into the aromatic ring system. The polypeptide is Chorismate synthase (Burkholderia vietnamiensis (strain G4 / LMG 22486) (Burkholderia cepacia (strain R1808))).